We begin with the raw amino-acid sequence, 161 residues long: Copper transporter 1 (161 aa).

The next 2 helical transmembrane spans lie at 55–75 (GGMY…VEFL) and 109–129 (VAYL…LVAV).

Belongs to the copper transporter (Ctr) (TC 1.A.56) family. SLC31A subfamily. Self-interacts. Interacts with SWEET11 and COPT2.

The protein localises to the cell membrane. Functionally, involved in the transport of copper, in cooperation with SWEET11 and COPT2. Contributes to the removal of copper (Cu) from xylem, and thus to the sensitivity toward bacterial pathogens such as X.oryzae pv. oryzae (Xoo). In Oryza sativa subsp. japonica (Rice), this protein is Copper transporter 1 (COPT1).